The chain runs to 286 residues: Interferon-induced 35 kDa protein (286 aa).

The leucine-zipper stretch occupies residues L5–L26. NID domains follow at residues A81 to D170 and F183 to E266.

It belongs to the NMI family. Homodimer. Also interacts with BATF. Interacts with TRIM21. Interacts with NMI; the interaction is direct and is facilitated by TRIM21. Phosphorylated. Dephosphorylation correlates with the formation of a complex with NMI. Expressed in a wide range of cell types, including fibroblasts, macrophages, and epithelial cells.

Its subcellular location is the cytoplasm. It localises to the nucleus. The protein resides in the secreted. Functionally, acts as a signaling pathway regulator involved in innate immune system response. In response to interferon IFN-alpha, associates in a complex with signaling pathway regulator NMI to regulate immune response; the complex formation prevents proteasome-mediated degradation of IFI35 and correlates with IFI35 dephosphorylation. In complex with NMI, inhibits virus-triggered type I interferon/IFN-beta production. In complex with NMI, negatively regulates nuclear factor NF-kappa-B signaling by inhibiting the nuclear translocation, activation and transcription of the NF-kappa-B subunit p65/RELA, resulting in the inhibition of endothelial cell proliferation, migration and re-endothelialization of injured arteries. Beside its role as an intracellular signaling pathway regulator, also functions extracellularly as damage-associated molecular patterns (DAMPs) to promote inflammation when actively released by macrophage to the extracellular space during cell injury and pathogen invasion. Macrophage-secreted IFI35 activates NF-kappa-B signaling in adjacent macrophages through Toll-like receptor 4/TLR4 activation, thereby inducing NF-kappa-B translocation from the cytoplasm into the nucleus which promotes the release of pro-inflammatory cytokines. The polypeptide is Interferon-induced 35 kDa protein (Homo sapiens (Human)).